A 566-amino-acid chain; its full sequence is Mucolipin-2 (566 aa).

Topologically, residues 1-65 are cytoplasmic; sequence MPGDEETLDL…YRARRQIPWK (65 aa). Residues 66 to 86 traverse the membrane as a helical segment; it reads LGLQILKIVMVTTQLVRFGLS. Residues 87-288 lie on the Extracellular side of the membrane; the sequence is NQLVVAFKED…ISGSTQRSTH (202 aa). Positions 107 to 123 are extracellular/lumenal pore loop; the sequence is KGFSGVDEDDYSCSIYT. 2 disulfides stabilise this stretch: C164-C190 and C243-C274. The helical transmembrane segment at 289 to 309 threads the bilayer; sequence YLLVFDVFVIMICLASLILCT. The Cytoplasmic portion of the chain corresponds to 310–346; the sequence is RSIVLALRLRKRFLNFFLEKYKQRVCGADQWEFVNGW. Residues 347 to 367 traverse the membrane as a helical segment; it reads YVLVTISDLMTIIGSILKMEI. Topologically, residues 368 to 376 are extracellular; that stretch reads KAKKLTNYD. A helical membrane pass occupies residues 377 to 397; that stretch reads VCSILLGTSTLFVWVGVIRYL. The Cytoplasmic segment spans residues 398 to 419; that stretch reads GYFQTYNVLILTMQASLPKVLR. A helical membrane pass occupies residues 420–440; the sequence is FCACAGMIYLGYTFCGWIVLG. Topologically, residues 441–448 are extracellular; it reads PYHEKFEN. An intramembrane region (pore-forming) is located at residues 449–469; the sequence is LNIVAECLFSLVNGDDMFATF. The short motif at 461–464 is the Selectivity filter element; it reads NGDD. Over 470-480 the chain is Extracellular; it reads AQIQQKSILVW. The chain crosses the membrane as a helical span at residues 481 to 502; sequence LFSRLYLYSFISLFIYMVLSLF. Residues 503 to 566 lie on the Cytoplasmic side of the membrane; that stretch reads IALITDSYHT…RSNDHLILID (64 aa).

The protein belongs to the transient receptor (TC 1.A.4) family. Polycystin subfamily. MCOLN2 sub-subfamily. Forms homooligomeric complexes; probably tetrameric. Can heterooligomerize with MCOLN1; heteromeric assemblies have different channel properties as compared to the respective homooligomers and may be tissue-specific. Interacts with TMEM176A. As to expression, expressed in activated macrophages and microglia (at protein level). Isoform 1 is widely expressed at very low levels. In terms of tissue distribution, isoform 2 is expressed at high levels in lymphoid tissues (thymus and spleen) and kidney, and at moderate levels in heart, lung, liver and stomach.

The protein localises to the cell membrane. It is found in the lysosome membrane. Its subcellular location is the recycling endosome membrane. It carries out the reaction Ca(2+)(in) = Ca(2+)(out). It catalyses the reaction Fe(2+)(in) = Fe(2+)(out). Fe(2+) channel activity is potentiated by low pH. Its function is as follows. Nonselective cation channel probably playing a role in the regulation of membrane trafficking events. Acts as a Ca(2+)-permeable cation channel with inwardly rectifying activity. May activate ARF6 and be involved in the trafficking of GPI-anchored cargo proteins to the cell surface via the ARF6-regulated recycling pathway. May play a role in immune processes. In adaptive immunity, TRPML2 and TRPML1 may play redundant roles in the function of the specialized lysosomes of B cells. In the innate immune response, may play a role in the regulation of chemokine secretion and macrophage migration. Through a possible and probably tissue-specific heteromerization with MCOLN1 may be at least in part involved in many lysosome-dependent cellular events. Also functions as a Fe(2+) permeable channel. The polypeptide is Mucolipin-2 (Mcoln2) (Mus musculus (Mouse)).